The following is a 141-amino-acid chain: Large ribosomal subunit protein uL11 (141 aa).

The protein belongs to the universal ribosomal protein uL11 family. As to quaternary structure, part of the ribosomal stalk of the 50S ribosomal subunit. Interacts with L10 and the large rRNA to form the base of the stalk. L10 forms an elongated spine to which L12 dimers bind in a sequential fashion forming a multimeric L10(L12)X complex. Post-translationally, one or more lysine residues are methylated.

Its function is as follows. Forms part of the ribosomal stalk which helps the ribosome interact with GTP-bound translation factors. The sequence is that of Large ribosomal subunit protein uL11 from Lactobacillus delbrueckii subsp. bulgaricus (strain ATCC 11842 / DSM 20081 / BCRC 10696 / JCM 1002 / NBRC 13953 / NCIMB 11778 / NCTC 12712 / WDCM 00102 / Lb 14).